Reading from the N-terminus, the 332-residue chain is GTP 3',8-cyclase (332 aa).

Residues 9–234 enclose the Radical SAM core domain; it reads TFGRRISYLR…DSDHRTGGPS (226 aa). Arg-18 lines the GTP pocket. Cys-25 and Cys-29 together coordinate [4Fe-4S] cluster. Residue Tyr-31 participates in S-adenosyl-L-methionine binding. Cys-32 contacts [4Fe-4S] cluster. Arg-67 contributes to the GTP binding site. Gly-71 lines the S-adenosyl-L-methionine pocket. Thr-100 serves as a coordination point for GTP. Ser-124 is an S-adenosyl-L-methionine binding site. Lys-160 contributes to the GTP binding site. Residue Met-194 participates in S-adenosyl-L-methionine binding. [4Fe-4S] cluster is bound by residues Cys-257 and Cys-260. 262–264 is a GTP binding site; sequence RVR. Cys-274 contacts [4Fe-4S] cluster.

Belongs to the radical SAM superfamily. MoaA family. In terms of assembly, monomer and homodimer. The cofactor is [4Fe-4S] cluster.

The catalysed reaction is GTP + AH2 + S-adenosyl-L-methionine = (8S)-3',8-cyclo-7,8-dihydroguanosine 5'-triphosphate + 5'-deoxyadenosine + L-methionine + A + H(+). It participates in cofactor biosynthesis; molybdopterin biosynthesis. Its function is as follows. Catalyzes the cyclization of GTP to (8S)-3',8-cyclo-7,8-dihydroguanosine 5'-triphosphate. The sequence is that of GTP 3',8-cyclase from Erythrobacter litoralis (strain HTCC2594).